Here is a 301-residue protein sequence, read N- to C-terminus: MSIDKSYCGFIAIVGRPNVGKSTLLNKLLGQKISITSRKAQTTRHRIVGIHTEGAYQAIYVDTPGLHMEEKRAINRLMNKAASSSIGDVELVIFVVEGTRWTPDDEMVLNKLREGKAPVILAVNKVDNVQEKADLLPHLQFLASQMNFLDIVPISAETGLNVDTIAAIVRKHLPEATHHFPEDYITDRSQRFMASEIIREKLMRFLGAELPYSVTVEIERFVSNERGGYDINGLILVEREGQKKMVIGNKGAKIKTIGIEARKDMQEMFEAPVHLELWVKVKSGWADDERALRSLGYVDDL.

The Era-type G domain maps to Tyr7 to Glu175. Residues Gly15–Ser22 are G1. Position 15 to 22 (Gly15 to Ser22) interacts with GTP. The interval Gln41–His45 is G2. The interval Asp62–Gly65 is G3. GTP-binding positions include Asp62–Leu66 and Asn124–Asp127. A G4 region spans residues Asn124–Asp127. The segment at Ile154–Ala156 is G5. A KH type-2 domain is found at Leu206–Ser283.

The protein belongs to the TRAFAC class TrmE-Era-EngA-EngB-Septin-like GTPase superfamily. Era GTPase family. As to quaternary structure, monomer.

It is found in the cytoplasm. The protein localises to the cell inner membrane. Its function is as follows. An essential GTPase that binds both GDP and GTP, with rapid nucleotide exchange. Plays a role in 16S rRNA processing and 30S ribosomal subunit biogenesis and possibly also in cell cycle regulation and energy metabolism. The chain is GTPase Era from Escherichia coli (strain K12 / DH10B).